A 200-amino-acid chain; its full sequence is Dephospho-CoA kinase (200 aa).

The DPCK domain maps to 4–200 (VIGLTGGIAS…AILKKWNIID (197 aa)). 12 to 17 (ASGKST) lines the ATP pocket.

The protein belongs to the CoaE family.

It is found in the cytoplasm. The catalysed reaction is 3'-dephospho-CoA + ATP = ADP + CoA + H(+). The protein operates within cofactor biosynthesis; coenzyme A biosynthesis; CoA from (R)-pantothenate: step 5/5. Its function is as follows. Catalyzes the phosphorylation of the 3'-hydroxyl group of dephosphocoenzyme A to form coenzyme A. This Bacillus anthracis protein is Dephospho-CoA kinase.